A 290-amino-acid polypeptide reads, in one-letter code: Ribosomal RNA small subunit methyltransferase A (290 aa).

Residues His37, Val39, Gly64, Glu85, Asp115, and Asn132 each coordinate S-adenosyl-L-methionine.

The protein belongs to the class I-like SAM-binding methyltransferase superfamily. rRNA adenine N(6)-methyltransferase family. RsmA subfamily.

Its subcellular location is the cytoplasm. It catalyses the reaction adenosine(1518)/adenosine(1519) in 16S rRNA + 4 S-adenosyl-L-methionine = N(6)-dimethyladenosine(1518)/N(6)-dimethyladenosine(1519) in 16S rRNA + 4 S-adenosyl-L-homocysteine + 4 H(+). Its function is as follows. Specifically dimethylates two adjacent adenosines (A1518 and A1519) in the loop of a conserved hairpin near the 3'-end of 16S rRNA in the 30S particle. May play a critical role in biogenesis of 30S subunits. The polypeptide is Ribosomal RNA small subunit methyltransferase A (Acidothermus cellulolyticus (strain ATCC 43068 / DSM 8971 / 11B)).